The following is a 514-amino-acid chain: 2,3-bisphosphoglycerate-independent phosphoglycerate mutase (514 aa).

Mn(2+) contacts are provided by D14 and S64. S64 functions as the Phosphoserine intermediate in the catalytic mechanism. Substrate is bound by residues H125, R155–D156, R187, R193, R263–R266, and K336. Mn(2+) contacts are provided by D403, H407, D444, H445, and H463.

This sequence belongs to the BPG-independent phosphoglycerate mutase family. Monomer. Mn(2+) is required as a cofactor.

It catalyses the reaction (2R)-2-phosphoglycerate = (2R)-3-phosphoglycerate. Its pathway is carbohydrate degradation; glycolysis; pyruvate from D-glyceraldehyde 3-phosphate: step 3/5. Its function is as follows. Catalyzes the interconversion of 2-phosphoglycerate and 3-phosphoglycerate. In Shewanella pealeana (strain ATCC 700345 / ANG-SQ1), this protein is 2,3-bisphosphoglycerate-independent phosphoglycerate mutase.